We begin with the raw amino-acid sequence, 511 residues long: Probable eukaryotic translation initiation factor 4H (511 aa).

Disordered stretches follow at residues 25–63 and 154–511; these read SWAD…DRGS and TIRV…EVKI. Positions 39 to 51 are enriched in basic and acidic residues; it reads AREESGSGLKRGD. The region spanning 86–162 is the RRM domain; sequence FTAFIGNLSF…RTIRVNVAEA (77 aa). Over residues 179-196 the composition is skewed to polar residues; it reads WRRSTPLASRESSSQPSR. Basic and acidic residues-rich tracts occupy residues 230-247 and 261-270; these read VRRD…RDPG and LAEKVDRDVP. Over residues 285-318 the composition is skewed to polar residues; it reads LADTEQTWSRGTKLRTPTTTSRQSSADSTPSSGA. Residues 331-349 are compositionally biased toward low complexity; the sequence is TAGSPSATANATPAAPASG. A Phosphoserine modification is found at Ser-334. Composition is skewed to basic and acidic residues over residues 360–388 and 394–419; these read AARE…EKQK and KPVE…DKVA. Residues 420–434 show a composition bias toward low complexity; it reads GKPTTAPATTTNTGA. Residues 438–448 are compositionally biased toward basic and acidic residues; that stretch reads GSADRAKKDEQ. The segment covering 451–467 has biased composition (polar residues); sequence EQVQPSRKSSQTGATSE. Residues 502 to 511 show a composition bias toward basic and acidic residues; the sequence is VTKGVEEVKI.

The protein resides in the cytoplasm. It localises to the P-body. Probable translation initiation factor. This chain is Probable eukaryotic translation initiation factor 4H, found in Cryptococcus neoformans var. grubii serotype A (strain H99 / ATCC 208821 / CBS 10515 / FGSC 9487) (Filobasidiella neoformans var. grubii).